The following is a 755-amino-acid chain: Polyribonucleotide nucleotidyltransferase (755 aa).

Residues Asp482 and Asp488 each contribute to the Mg(2+) site. The region spanning 549-608 is the KH domain; sequence PRMVSFYIDKDKISAAIGAKGKNIRSVCERSNAKIEIGDDGKVSVFAMSSAEAEIAKNMM. The S1 motif domain maps to 618–686; the sequence is GAIVDVKVVK…KGGCPKLSRR (69 aa). Residues 702 to 714 are compositionally biased toward basic and acidic residues; sequence NEEKKDSSNDRDY. The tract at residues 702 to 755 is disordered; the sequence is NEEKKDSSNDRDYYNSPFNRKSGHRKRPVHSRSSFSNRNNRPKFGNDDSSSSFY. Residues 722-731 show a composition bias toward basic residues; the sequence is KSGHRKRPVH.

Belongs to the polyribonucleotide nucleotidyltransferase family. The cofactor is Mg(2+).

It localises to the cytoplasm. The enzyme catalyses RNA(n+1) + phosphate = RNA(n) + a ribonucleoside 5'-diphosphate. Functionally, involved in mRNA degradation. Catalyzes the phosphorolysis of single-stranded polyribonucleotides processively in the 3'- to 5'-direction. This Wolbachia sp. subsp. Brugia malayi (strain TRS) protein is Polyribonucleotide nucleotidyltransferase.